We begin with the raw amino-acid sequence, 466 residues long: MSNGTIVQCIGAVVDIQFPRDNMPKIYEALTLVDEGSSFAEKGLTLEVQQQLGDGVVRTIALGSSDGLRRGMQVAGTGAPISVPVGHGTLGRIMDVLGRPIDEAGPIASDEKRAIHQPAPRFDELSPSVELLETGIKVIDLVCPFAKGGKVGLFGGAGVGKTVNMMELINNIAKQHSGLSVFAGVGERTREGNDFYHEMEESNVLDKVAMVFGQMNEPPGNRLRVALTGLTMAEKFRDEGRDILFFVDNIYRYTLAGTEVSALLGRMPSAVGYQPTLAEEMGVLQERITSTKTGSITSIQAVYVPADDLTDPSPATTFQHLDSTVVLSRDIAALGIYPAVDPLDSSSRQLDPQVVGEEHYQVARGVQQTLQRYKELRDIIAILGMDELSPEDKQAVARARKIQRFLSQPFYVAEVFTGSPGKYVSLAETIRGFKMIVDGECDALPEQAFYMVGTIDEAFEKAKKLQ.

ATP is bound at residue 155–162; it reads GGAGVGKT.

The protein belongs to the ATPase alpha/beta chains family. In terms of assembly, F-type ATPases have 2 components, CF(1) - the catalytic core - and CF(0) - the membrane proton channel. CF(1) has five subunits: alpha(3), beta(3), gamma(1), delta(1), epsilon(1). CF(0) has three main subunits: a(1), b(2) and c(9-12). The alpha and beta chains form an alternating ring which encloses part of the gamma chain. CF(1) is attached to CF(0) by a central stalk formed by the gamma and epsilon chains, while a peripheral stalk is formed by the delta and b chains.

The protein resides in the cell inner membrane. It carries out the reaction ATP + H2O + 4 H(+)(in) = ADP + phosphate + 5 H(+)(out). Its function is as follows. Produces ATP from ADP in the presence of a proton gradient across the membrane. The catalytic sites are hosted primarily by the beta subunits. In Bordetella pertussis (strain Tohama I / ATCC BAA-589 / NCTC 13251), this protein is ATP synthase subunit beta.